The following is a 373-amino-acid chain: Lipoyl synthase (373 aa).

The interval H12–I36 is disordered. C81, C86, C92, C107, C111, C114, and S323 together coordinate [4Fe-4S] cluster. Positions F93–S312 constitute a Radical SAM core domain. Residues P346–R373 are disordered. Residues A360–R373 are compositionally biased toward polar residues.

The protein belongs to the radical SAM superfamily. Lipoyl synthase family. The cofactor is [4Fe-4S] cluster.

The protein localises to the cytoplasm. The enzyme catalyses [[Fe-S] cluster scaffold protein carrying a second [4Fe-4S](2+) cluster] + N(6)-octanoyl-L-lysyl-[protein] + 2 oxidized [2Fe-2S]-[ferredoxin] + 2 S-adenosyl-L-methionine + 4 H(+) = [[Fe-S] cluster scaffold protein] + N(6)-[(R)-dihydrolipoyl]-L-lysyl-[protein] + 4 Fe(3+) + 2 hydrogen sulfide + 2 5'-deoxyadenosine + 2 L-methionine + 2 reduced [2Fe-2S]-[ferredoxin]. It functions in the pathway protein modification; protein lipoylation via endogenous pathway; protein N(6)-(lipoyl)lysine from octanoyl-[acyl-carrier-protein]: step 2/2. In terms of biological role, catalyzes the radical-mediated insertion of two sulfur atoms into the C-6 and C-8 positions of the octanoyl moiety bound to the lipoyl domains of lipoate-dependent enzymes, thereby converting the octanoylated domains into lipoylated derivatives. The sequence is that of Lipoyl synthase from Xylella fastidiosa (strain M12).